A 362-amino-acid polypeptide reads, in one-letter code: Uroporphyrinogen decarboxylase (362 aa).

Substrate contacts are provided by residues 39 to 43 (RQAGR), Asp-88, Tyr-165, Thr-220, and His-334.

It belongs to the uroporphyrinogen decarboxylase family. As to quaternary structure, homodimer.

It localises to the cytoplasm. The catalysed reaction is uroporphyrinogen III + 4 H(+) = coproporphyrinogen III + 4 CO2. It participates in porphyrin-containing compound metabolism; protoporphyrin-IX biosynthesis; coproporphyrinogen-III from 5-aminolevulinate: step 4/4. Functionally, catalyzes the decarboxylation of four acetate groups of uroporphyrinogen-III to yield coproporphyrinogen-III. This chain is Uroporphyrinogen decarboxylase, found in Synechococcus sp. (strain JA-3-3Ab) (Cyanobacteria bacterium Yellowstone A-Prime).